Here is a 393-residue protein sequence, read N- to C-terminus: Succinate--CoA ligase [ADP-forming] subunit beta (393 aa).

Positions 9–237 (RDLFAKHGVP…KDAANPLEAA (229 aa)) constitute an ATP-grasp domain. ATP-binding positions include Lys45, 52–54 (GRG), Glu92, Pro95, and Glu100. Mg(2+) contacts are provided by Asn192 and Asp206. Substrate contacts are provided by residues Asn257 and 319–321 (GIT).

This sequence belongs to the succinate/malate CoA ligase beta subunit family. Heterotetramer of two alpha and two beta subunits. Requires Mg(2+) as cofactor.

The catalysed reaction is succinate + ATP + CoA = succinyl-CoA + ADP + phosphate. It catalyses the reaction GTP + succinate + CoA = succinyl-CoA + GDP + phosphate. It functions in the pathway carbohydrate metabolism; tricarboxylic acid cycle; succinate from succinyl-CoA (ligase route): step 1/1. Succinyl-CoA synthetase functions in the citric acid cycle (TCA), coupling the hydrolysis of succinyl-CoA to the synthesis of either ATP or GTP and thus represents the only step of substrate-level phosphorylation in the TCA. The beta subunit provides nucleotide specificity of the enzyme and binds the substrate succinate, while the binding sites for coenzyme A and phosphate are found in the alpha subunit. The protein is Succinate--CoA ligase [ADP-forming] subunit beta of Streptomyces griseus subsp. griseus (strain JCM 4626 / CBS 651.72 / NBRC 13350 / KCC S-0626 / ISP 5235).